The following is a 188-amino-acid chain: Large ribosomal subunit protein bL9 (188 aa).

Basic and acidic residues predominate over residues 149 to 170 (RSEEEAERQARGEEIGVEKEEP). Residues 149–188 (RSEEEAERQARGEEIGVEKEEPSGFVEEALEETVEAPAEA) are disordered.

Belongs to the bacterial ribosomal protein bL9 family.

In terms of biological role, binds to the 23S rRNA. The polypeptide is Large ribosomal subunit protein bL9 (Gluconacetobacter diazotrophicus (strain ATCC 49037 / DSM 5601 / CCUG 37298 / CIP 103539 / LMG 7603 / PAl5)).